The following is an 80-amino-acid chain: MTKDNKTFEDRLDRLKAIVSALEKGDLPLEEGVALFKEGQTLSKECATQLEKARNEVKIVTGGEVEDFDVDTEEDTADDS.

This sequence belongs to the XseB family. As to quaternary structure, heterooligomer composed of large and small subunits.

It localises to the cytoplasm. The catalysed reaction is Exonucleolytic cleavage in either 5'- to 3'- or 3'- to 5'-direction to yield nucleoside 5'-phosphates.. Bidirectionally degrades single-stranded DNA into large acid-insoluble oligonucleotides, which are then degraded further into small acid-soluble oligonucleotides. The chain is Exodeoxyribonuclease 7 small subunit from Maridesulfovibrio salexigens (strain ATCC 14822 / DSM 2638 / NCIMB 8403 / VKM B-1763) (Desulfovibrio salexigens).